We begin with the raw amino-acid sequence, 128 residues long: MAPLKKPAVKGGKKKKQVLKFTLDCTHPVEDGIMDAANFEQFLQERIKVNGKAGNLGGGVVSIERSKSKITVTSDIPFSKRYLKYLTKKYLKKNNLRDWLRVVANTKESYELRYFQINQDEEEEEDED.

It belongs to the eukaryotic ribosomal protein eL22 family. Component of the large ribosomal subunit.

The protein resides in the cytoplasm. In terms of biological role, component of the large ribosomal subunit. The ribosome is a large ribonucleoprotein complex responsible for the synthesis of proteins in the cell. In Ictalurus punctatus (Channel catfish), this protein is Large ribosomal subunit protein eL22 (rpl22).